We begin with the raw amino-acid sequence, 507 residues long: Histidine ammonia-lyase (507 aa).

Residues 141 to 143 constitute a cross-link (5-imidazolinone (Ala-Gly)); that stretch reads ASG. Ser142 bears the 2,3-didehydroalanine (Ser) mark.

This sequence belongs to the PAL/histidase family. Post-translationally, contains an active site 4-methylidene-imidazol-5-one (MIO), which is formed autocatalytically by cyclization and dehydration of residues Ala-Ser-Gly.

It localises to the cytoplasm. It catalyses the reaction L-histidine = trans-urocanate + NH4(+). Its pathway is amino-acid degradation; L-histidine degradation into L-glutamate; N-formimidoyl-L-glutamate from L-histidine: step 1/3. This chain is Histidine ammonia-lyase, found in Natranaerobius thermophilus (strain ATCC BAA-1301 / DSM 18059 / JW/NM-WN-LF).